Here is a 361-residue protein sequence, read N- to C-terminus: GDSL esterase/lipase At2g40250 (361 aa).

Residues 1–28 (MNRNQHKPMFVTFLINILLLQLLNLTNA) form the signal peptide. The active-site Nucleophile is Ser-43. Residues Asp-337 and His-340 contribute to the active site.

This sequence belongs to the 'GDSL' lipolytic enzyme family.

It is found in the secreted. This Arabidopsis thaliana (Mouse-ear cress) protein is GDSL esterase/lipase At2g40250.